Reading from the N-terminus, the 156-residue chain is Small ribosomal subunit protein uS7 (156 aa).

It belongs to the universal ribosomal protein uS7 family. In terms of assembly, part of the 30S ribosomal subunit. Contacts proteins S9 and S11.

In terms of biological role, one of the primary rRNA binding proteins, it binds directly to 16S rRNA where it nucleates assembly of the head domain of the 30S subunit. Is located at the subunit interface close to the decoding center, probably blocks exit of the E-site tRNA. This chain is Small ribosomal subunit protein uS7, found in Allorhizobium ampelinum (strain ATCC BAA-846 / DSM 112012 / S4) (Agrobacterium vitis (strain S4)).